The chain runs to 475 residues: Ribulose bisphosphate carboxylase large chain (475 aa).

A propeptide spanning residues 1–2 (MV) is cleaved from the precursor. Pro-3 is modified (N-acetylproline). Lys-14 carries the N6,N6,N6-trimethyllysine modification. Positions 123 and 173 each coordinate substrate. Residue Lys-175 is the Proton acceptor of the active site. A substrate-binding site is contributed by Lys-177. Positions 201, 203, and 204 each coordinate Mg(2+). Lys-201 is subject to N6-carboxylysine. The Proton acceptor role is filled by His-294. Substrate contacts are provided by Arg-295, His-327, and Ser-379.

This sequence belongs to the RuBisCO large chain family. Type I subfamily. In terms of assembly, heterohexadecamer of 8 large chains and 8 small chains. Mg(2+) serves as cofactor.

It localises to the plastid. It is found in the chloroplast. The enzyme catalyses 2 (2R)-3-phosphoglycerate + 2 H(+) = D-ribulose 1,5-bisphosphate + CO2 + H2O. The catalysed reaction is D-ribulose 1,5-bisphosphate + O2 = 2-phosphoglycolate + (2R)-3-phosphoglycerate + 2 H(+). RuBisCO catalyzes two reactions: the carboxylation of D-ribulose 1,5-bisphosphate, the primary event in carbon dioxide fixation, as well as the oxidative fragmentation of the pentose substrate in the photorespiration process. Both reactions occur simultaneously and in competition at the same active site. The polypeptide is Ribulose bisphosphate carboxylase large chain (Chlamydomonas moewusii (Chlamydomonas eugametos)).